Reading from the N-terminus, the 307-residue chain is Cyclin-dependent kinase 5 activator 1 (307 aa).

G2 carries N-myristoyl glycine lipidation. S8 is modified (phosphoserine; by CDK5). Positions 97-135 (TFAQPPPAQPPAPPASQLSGSQTGVSSSVKKAPHPAVSS) are disordered. Residues 100–110 (QPPPAQPPAPP) show a composition bias toward pro residues. The segment covering 112–125 (SQLSGSQTGVSSSV) has biased composition (polar residues). A Phosphothreonine; by CDK5 modification is found at T138.

Belongs to the cyclin-dependent kinase 5 activator family. Heterodimer composed of a catalytic subunit CDK5 and a regulatory subunit CDK5R1 (p25) and macromolecular complex composed of at least CDK5, CDK5R1 (p35) and CDK5RAP1 or CDK5RAP2 or CDK5RAP3. Only the heterodimer shows kinase activity. Interacts with EPHA4 and NGEF; may mediate the activation of NGEF by EPHA4. Interacts with RASGRF2. The complex p35/CDK5 interacts with CLOCK. In terms of processing, the p35 form is proteolytically cleaved by calpain, giving rise to the p25 form. P35 has a 5 to 10 fold shorter half-life compared to p25. The conversion results in deregulation of the CDK5 kinase: p25/CDK5 kinase displays an increased and altered tau phosphorylation in comparison to the p35/CDK5 kinase in vivo. Myristoylated. A proper myristoylation signal is essential for the proper distribution of p35. Post-translationally, phosphorylation at Ser-8 and Thr-138 by CDK5 prevents calpain-mediated proteolysis. In terms of processing, ubiquitinated, leading to its degradation: degradation of p35 by proteasome results in down-regulation of CDK5 activity. During this process, CDK5 phosphorylates p35 and induces its ubiquitination and subsequent degradation. Ubiquitinated by the CRL2(FEM1B) complex, which recognizes the -Gly-Leu-Asp-Arg C-degron at the C-terminus, leading to its degradation. In terms of tissue distribution, brain and neuron specific.

The protein localises to the cell membrane. It is found in the cell projection. The protein resides in the neuron projection. Its subcellular location is the nucleus. It localises to the cytoplasm. The protein localises to the perinuclear region. It is found in the perikaryon. In terms of biological role, p35 is a neuron specific activator of CDK5. The complex p35/CDK5 is required for neurite outgrowth and cortical lamination. Involved in dendritic spine morphogenesis by mediating the EFNA1-EPHA4 signaling. Activator of TPKII. The complex p35/CDK5 participates in the regulation of the circadian clock by modulating the function of CLOCK protein: phosphorylates CLOCK at 'Thr-451' and 'Thr-461' and regulates the transcriptional activity of the CLOCK-BMAL1 heterodimer in association with altered stability and subcellular distribution. The polypeptide is Cyclin-dependent kinase 5 activator 1 (CDK5R1) (Bos taurus (Bovine)).